We begin with the raw amino-acid sequence, 85 residues long: Small ribosomal subunit protein bS16c (85 aa).

The protein belongs to the bacterial ribosomal protein bS16 family.

It is found in the plastid. The protein resides in the chloroplast. This is Small ribosomal subunit protein bS16c from Nicotiana tabacum (Common tobacco).